The chain runs to 205 residues: Outer-membrane lipoprotein LolB (205 aa).

Positions 1–17 are cleaved as a signal peptide; that stretch reads MFLRHCITFTLIALLAG. Cys18 is lipidated: N-palmitoyl cysteine. Cys18 carries S-diacylglycerol cysteine lipidation.

The protein belongs to the LolB family. Monomer.

The protein localises to the cell outer membrane. In terms of biological role, plays a critical role in the incorporation of lipoproteins in the outer membrane after they are released by the LolA protein. This Pseudomonas putida (strain W619) protein is Outer-membrane lipoprotein LolB.